Reading from the N-terminus, the 188-residue chain is Ribosome-recycling factor (188 aa).

This sequence belongs to the RRF family.

The protein resides in the cytoplasm. In terms of biological role, responsible for the release of ribosomes from messenger RNA at the termination of protein biosynthesis. May increase the efficiency of translation by recycling ribosomes from one round of translation to another. The chain is Ribosome-recycling factor from Cereibacter sphaeroides (strain ATCC 17023 / DSM 158 / JCM 6121 / CCUG 31486 / LMG 2827 / NBRC 12203 / NCIMB 8253 / ATH 2.4.1.) (Rhodobacter sphaeroides).